The primary structure comprises 539 residues: MAKRILFREEARKALEQGINQLADAIKVTIGPKGRNVVLEKKFGAPQIVNDGVTIAKEIELADPLENTGAQLMREVASKTNDVAGDGTTTATILAQSMVREGLKNISAGANPVALRRGIEKTTAYLVEQIAAHAKPVEGRKTIAEVATISAGNDSEVGEMIAKAMDAVGRDGVITVEESKSLETELDVVEGMQFDRGYISPYFVTDSERMVAEYENAYLLITSNKISSLQDLVPILERVAREGRPLLVIAEDVEGEALATLVVNRLRGVLNAVAVKAPAFGDRRKAMLEDIAILTGGQLISEDVGIKLDKVTLDMMGVARKITVTKDKTTIVTDGSTKAAVEKRVAQIRKQLETTDSEYDREKLQERIAKLAGGVAVIKVGAATETELKDRKLRIEDALNATRAAVEEGIVPGGGATLLHLSKGIPAFKAKLNAEEQVGAEIVYRALQAPLFQIAHNAGLEGSVVVEKVLEKEMPFGFDALTGTYVDMFAQGIVDPAKVVRSALQNAASIAGMYLTTEAIVVEKPEPKPAAGSAPKGMM.

ATP is bound by residues 29-32, 86-90, Gly-414, 479-481, and Asp-495; these read TIGP, DGTTT, and DAL.

The protein belongs to the chaperonin (HSP60) family. In terms of assembly, forms a cylinder of 14 subunits composed of two heptameric rings stacked back-to-back. Interacts with the co-chaperonin GroES.

The protein resides in the cytoplasm. The enzyme catalyses ATP + H2O + a folded polypeptide = ADP + phosphate + an unfolded polypeptide.. In terms of biological role, together with its co-chaperonin GroES, plays an essential role in assisting protein folding. The GroEL-GroES system forms a nano-cage that allows encapsulation of the non-native substrate proteins and provides a physical environment optimized to promote and accelerate protein folding. In Synechococcus sp. (strain JA-2-3B'a(2-13)) (Cyanobacteria bacterium Yellowstone B-Prime), this protein is Chaperonin GroEL 2.